The following is a 335-amino-acid chain: MAVDITLLFRASVKTVKTRNKALGVAVGGGVDGSRDELFRRSPRPKGDFSSRAREVISHIGKLRDFLLEHRKDYINAYSHTMSEYGRMTDTERDQIDQDAQIFMRTCSEAIQQLRTEAHKEIHSQQVKEHRTAVLDFIEDYLKRVCKLYSEQRAIRVKRVVDKKRLSKLEPEPNTKTRESTSSEKVSQSPSKDSEENPATEERPEKILAETQPELGTWGDGKGEDELSPEEIQMFEQENQRLIGEMNSLFDEVRQIEGRVVEISRLQEIFTEKVLQQEAEIDSIHQLVVGATENIKEGNEDIREAIKNNAGFRVWILFFLVMCSFSLLFLDWYDS.

At 1 to 309 (MAVDITLLFR…EDIREAIKNN (309 aa)) the chain is on the cytoplasmic side. 2 stretches are compositionally biased toward basic and acidic residues: residues 168–182 (KLEPEPNTKTRESTS) and 192–208 (KDSEENPATEERPEKIL). A disordered region spans residues 168 to 226 (KLEPEPNTKTRESTSSEKVSQSPSKDSEENPATEERPEKILAETQPELGTWGDGKGEDE). One can recognise a t-SNARE coiled-coil homology domain in the interval 243 to 305 (IGEMNSLFDE…KEGNEDIREA (63 aa)). Residues 310-330 (AGFRVWILFFLVMCSFSLLFL) traverse the membrane as a helical; Anchor for type IV membrane protein segment. Topologically, residues 331–335 (DWYDS) are vesicular.

This sequence belongs to the syntaxin family. As to quaternary structure, component of a SNARE complex consisting of STX18, USE1L, BNIP1/SEC20L, and SEC22B. RINT1/TIP20L and ZW10 are associated with the complex through interaction with BNIP1/SEC20L. Interacts directly with USE1L and BNIP1/SEC20L. As to expression, ubiquitous.

It localises to the endoplasmic reticulum membrane. Its subcellular location is the golgi apparatus membrane. In terms of biological role, syntaxin that may be involved in targeting and fusion of Golgi-derived retrograde transport vesicles with the ER. In Homo sapiens (Human), this protein is Syntaxin-18 (STX18).